Reading from the N-terminus, the 102-residue chain is Scorpine-like-2 (102 aa).

A signal peptide spans 1–19 (MQTQCTVLQLLVLVALCSC). Residues 63-102 (QQLCLIVDTVQWCNKSCLAAENKEGYCHGTKCKCGIKVSY) form the BetaSPN-type CS-alpha/beta domain. 3 cysteine pairs are disulfide-bonded: Cys-66/Cys-89, Cys-75/Cys-94, and Cys-79/Cys-96.

It belongs to the long chain scorpion toxin family. Class 3 subfamily. Expressed by the venom gland.

It is found in the secreted. Inhibits voltage-gated potassium channels. The polypeptide is Scorpine-like-2 (Urodacus yaschenkoi (Inland robust scorpion)).